We begin with the raw amino-acid sequence, 875 residues long: Leucine--tRNA ligase (875 aa).

The 'HIGH' region motif lies at 57–67 (PYPSGQIHMGH). Residues 631–635 (KMSKS) carry the 'KMSKS' region motif. Lys634 provides a ligand contact to ATP.

Belongs to the class-I aminoacyl-tRNA synthetase family.

Its subcellular location is the cytoplasm. The catalysed reaction is tRNA(Leu) + L-leucine + ATP = L-leucyl-tRNA(Leu) + AMP + diphosphate. In Granulibacter bethesdensis (strain ATCC BAA-1260 / CGDNIH1), this protein is Leucine--tRNA ligase.